The primary structure comprises 864 residues: Nitrate reductase [NADH] (864 aa).

Cysteine 139 provides a ligand contact to Mo-molybdopterin. One can recognise a Cytochrome b5 heme-binding domain in the interval 497–572 (PRQYTMEEVA…LAQYYIGDLV (76 aa)). Heme contacts are provided by histidine 532 and histidine 555. The FAD-binding FR-type domain maps to 606–718 (RQKVKLPLIE…KGPLGHFVYD (113 aa)). Residues 658–661 (RAYT), 675–679 (LIKVY), phenylalanine 680, phenylalanine 687, 692–694 (KMS), and threonine 746 each bind FAD.

The protein belongs to the nitrate reductase family. As to quaternary structure, homodimer. FAD is required as a cofactor. Requires heme as cofactor. The cofactor is Mo-molybdopterin.

It catalyses the reaction nitrite + NAD(+) + H2O = nitrate + NADH + H(+). Nitrate reductase is a key enzyme involved in the first step of nitrate assimilation in plants, fungi and bacteria. The protein is Nitrate reductase [NADH] (NITA) of Volvox carteri (Green alga).